The primary structure comprises 244 residues: Cobalt transport protein CbiM (244 aa).

The N-terminal stretch at 1–20 is a signal peptide; the sequence is MRKITFIAALLSLLPRYALA. Transmembrane regions (helical) follow at residues 31–51, 63–83, 95–115, 117–137, 161–181, and 201–221; these read KWCL…LIYI, ILLG…LPSV, LGAI…VLLF, ALLL…SMAV, VFLG…LQLA, and IFAV…VIVL.

This sequence belongs to the CbiM family. In terms of assembly, forms an energy-coupling factor (ECF) transporter complex composed of an ATP-binding protein (A component, CbiO), a transmembrane protein (T component, CbiQ) and 2 possible substrate-capture proteins (S components, CbiM and CbiN) of unknown stoichimetry.

Its subcellular location is the cell membrane. The protein operates within cofactor biosynthesis; adenosylcobalamin biosynthesis. Its function is as follows. Part of the energy-coupling factor (ECF) transporter complex CbiMNOQ involved in cobalt import. The chain is Cobalt transport protein CbiM from Thermosediminibacter oceani (strain ATCC BAA-1034 / DSM 16646 / JW/IW-1228P).